Here is a 464-residue protein sequence, read N- to C-terminus: Citrate synthase, mitochondrial (464 aa).

Residues 1–27 (MALLTAATRLLGAKNSSCLVLAARHAS) constitute a mitochondrion transit peptide. The short motif at 2-21 (ALLTAATRLLGAKNSSCLVL) is the SIFI-degron element. Lysine 57 is modified (N6-succinyllysine). The residue at position 76 (lysine 76) is an N6-acetyllysine; alternate. The residue at position 76 (lysine 76) is an N6-succinyllysine; alternate. N6-succinyllysine occurs at positions 103 and 193. Phosphoserine is present on serine 226. Histidine 301 is an active-site residue. 2 positions are modified to N6-acetyllysine; alternate: lysine 321 and lysine 327. 2 positions are modified to N6-succinyllysine; alternate: lysine 321 and lysine 327. The active site involves histidine 347. Residue arginine 356 coordinates oxaloacetate. Lysine 375 bears the N6-acetyllysine; alternate mark. Position 375 is an N6-succinyllysine; alternate (lysine 375). Lysine 382 carries the N6-acetyllysine modification. Lysine 393 carries the post-translational modification N6-acetyllysine; alternate. Lysine 393 is subject to N6-succinyllysine; alternate. Lysine 395 is modified (N6,N6,N6-trimethyllysine). Aspartate 402 is an active-site residue. Arginine 428 and arginine 448 together coordinate oxaloacetate. N6-succinyllysine is present on lysine 450. Lysine 459 is subject to N6-acetyllysine; alternate. Lysine 459 carries the post-translational modification N6-succinyllysine; alternate.

Belongs to the citrate synthase family. Homodimer. In terms of processing, methylated. Trimethylation at Lys-395 by CSKMT decreases citrate synthase activity. Post-translationally, in response to mitochondrial stress, the precursor protein is ubiquitinated by the SIFI complex in the cytoplasm before mitochondrial import, leading to its degradation. Within the SIFI complex, UBR4 initiates ubiquitin chain that are further elongated or branched by KCMF1.

It is found in the mitochondrion matrix. It carries out the reaction oxaloacetate + acetyl-CoA + H2O = citrate + CoA + H(+). It functions in the pathway carbohydrate metabolism; tricarboxylic acid cycle; isocitrate from oxaloacetate: step 1/2. In terms of biological role, key enzyme of the Krebs tricarboxylic acid cycle which catalyzes the synthesis of citrate from acetyl coenzyme A and oxaloacetate. The chain is Citrate synthase, mitochondrial (Cs) from Mus musculus (Mouse).